The primary structure comprises 353 residues: Homeobox protein Mohawk (353 aa).

Residues 18-27 are compositionally biased toward basic and acidic residues; sequence RGTPDRERGS. The interval 18 to 50 is disordered; it reads RGTPDRERGSRTFSGFLDNPHTGPEVGIPDGPP. Residues 71–132 constitute a DNA-binding region (homeobox; TALE-type); sequence VRHKRQALQD…NARRRLKNTV (62 aa). 2 disordered regions span residues 157–183 and 243–302; these read LSVS…EEGY and MGKT…PSKD.

This sequence belongs to the TALE/IRO homeobox family.

Its subcellular location is the nucleus. In terms of biological role, may act as a morphogenetic regulator of cell adhesion. Participates in the early events that lead to differentiation. The chain is Homeobox protein Mohawk (Mkx) from Mus musculus (Mouse).